A 2439-amino-acid polypeptide reads, in one-letter code: Mucin-6 (2439 aa).

Positions 1-22 (MVQRWLLLSCCGALLSAGLANT) are cleaved as a signal peptide. Positions 43 to 214 (GQCSTWGAGH…KLDDPGEICT (172 aa)) constitute a VWFD 1 domain. 2 disulfides stabilise this stretch: Cys45-Cys176 and Cys67-Cys213. Asn268 is a glycosylation site (N-linked (GlcNAc...) asparagine). The TIL domain occupies 302 to 357 (CPANQVYQECGSACVKTCSNPQHSCSSSCTFGCFCPEGTVLNDLSNNHTCVPVTQC). The VWFD 2 domain maps to 395–579 (GHCSLEGGSF…ALERETDPCS (185 aa)). 2 disulfides stabilise this stretch: Cys397–Cys533 and Cys419–Cys578. 2 N-linked (GlcNAc...) asparagine glycosylation sites follow: Asn486 and Asn659. The 173-residue stretch at 866 to 1038 (STCTLYGEGH…NSWKESPLCG (173 aa)) folds into the VWFD 3 domain. 4 disulfide bridges follow: Cys868–Cys1002, Cys890–Cys1037, Cys899–Cys999, and Cys917–Cys924. N-linked (GlcNAc...) asparagine glycans are attached at residues Asn975 and Asn1179. 8 disordered regions span residues 1202–1455 (PQPP…TSLV), 1471–1626 (ATSA…LVTP), 1642–1834 (SASI…HPHT), 1868–1983 (SIHS…STGP), 2033–2077 (ATSA…THSS), 2090–2196 (SSSW…SASP), 2233–2278 (VSPT…SLTT), and 2323–2348 (LTAHGSTPASAPVSSLGTPTPTSPGV). Residues 1224–1265 (TGTSTTIGLLSSTGPSPSSNHTPASPTQTPLLPATLTSSKPT) are compositionally biased toward low complexity. The span at 1276-1286 (TAVTPQATSGL) shows a compositional bias: polar residues. Low complexity predominate over residues 1294–1339 (STATKPTVTQATTRATASTASPATTSTAQSTTRTTMTLPTPATSGT). The segment covering 1340–1351 (SPTLPKSTNQEL) has biased composition (polar residues). Low complexity-rich tracts occupy residues 1352–1373 (PGTTATQTTGPRPTPASTTGPT) and 1381–1415 (TRPTATETTQTRTTTEYTTPQTPHTTHSPPTAGSP). Polar residues-rich tracts occupy residues 1416 to 1455 (VPSTGPVTATSFHATTTYPTPSHPETTLPTHVPPFSTSLV), 1471 to 1481 (ATSASNHSAPT), and 1490 to 1520 (LKATGSTHTAPPITPTTSGTSQAHSSFSTNK). Composition is skewed to low complexity over residues 1521 to 1567 (TPTS…ATSS) and 1574 to 1611 (TTHSPPTGSSPFSSTGPMTATSFKTTTTYPTPSHPQTT). A 1; truncated repeat occupies 1561–1738 (TNSATSSRPP…TTSGTSQSRS (178 aa)). The approximate repeats stretch occupies residues 1607-1953 (HPQTTLPTHV…STGTRTPVAH (347 aa)). Positions 1659-1686 (LKATGSTHTAPTMTLTTSGTSQALSSLN) are enriched in polar residues. Low complexity predominate over residues 1687–1768 (TAKTSTSLHS…PEVTSTSTTS (82 aa)). A compositionally biased stretch (polar residues) spans 1769-1793 (ITPNHTSTGTRTPVAHTTSATSSRL). Copy 2 of the repeat occupies 1785 to 1953 (TTSATSSRLP…STGTRTPVAH (169 aa)). Low complexity-rich tracts occupy residues 1794–1834 (PTPF…HPHT) and 1891–1917 (TAPPMTPTTSGTSQSPSSFSTAKTSTS). The span at 1918–1962 (LPYHTSSTHHPEVTPTSTTNITPKHTSTGTRTPVAHTTSASSSRL) shows a compositional bias: polar residues. Residues 1963–1983 (PTPFTTHSPPTGSSPFSSTGP) are compositionally biased toward low complexity. Positions 2052-2070 (LKATGSTHTAPPMTVTTSG) are enriched in polar residues. A compositionally biased stretch (low complexity) spans 2090 to 2102 (SSSWLPQNSSSRP). Polar residues predominate over residues 2107–2120 (ITTQLPHLSSATTP). Over residues 2121 to 2196 (VSTTNQLSSS…PTTASVSASP (76 aa)) the composition is skewed to low complexity. Residues 2240-2264 (HLASSTIAFPSTPRTTASTHTAPAF) show a composition bias toward polar residues. Positions 2265 to 2278 (SSQSTTSRSTSLTT) are enriched in low complexity. Positions 2323-2347 (LTAHGSTPASAPVSSLGTPTPTSPG) are enriched in polar residues. 4 disulfide bridges follow: Cys2349/Cys2396, Cys2363/Cys2410, Cys2372/Cys2430, and Cys2376/Cys2432. The CTCK domain occupies 2349 to 2438 (CSVREQQEEI…HCVCSSVACG (90 aa)).

In terms of assembly, multimer; disulfide-linked. O-glycosylated. In terms of tissue distribution, expressed in the regenerative zone of gastric antrum, gastric body mucosa and gastric incisura mucosa. Expressed in the deeper mucous glands of gastric antrum. Overexpressed in Helicobacter pylori infected gastric epithelium. Highly expressed in duodenal Brunner's glands, gall bladder, seminal vesicle, pancreatic centroacinar cells and ducts, and periductal glands of the common bile duct.

It localises to the secreted. May provide a mechanism for modulation of the composition of the protective mucus layer related to acid secretion or the presence of bacteria and noxious agents in the lumen. Plays an important role in the cytoprotection of epithelial surfaces and are used as tumor markers in a variety of cancers. May play a role in epithelial organogenesis. In Homo sapiens (Human), this protein is Mucin-6 (MUC6).